A 317-amino-acid polypeptide reads, in one-letter code: Retinol dehydrogenase 16 (317 aa).

An NAD(+)-binding site is contributed by phenylalanine 33–leucine 57. Residue tyrosine 176 is the Proton acceptor of the active site. A helical membrane pass occupies residues leucine 289–threonine 309.

It belongs to the short-chain dehydrogenases/reductases (SDR) family. Homodimer. Not glycosylated.

The protein resides in the endoplasmic reticulum membrane. It localises to the microsome membrane. The catalysed reaction is all-trans-retinol--[retinol-binding protein] + NAD(+) = all-trans-retinal--[retinol-binding protein] + NADH + H(+). It carries out the reaction 9-cis-retinol + NAD(+) = 9-cis-retinal + NADH + H(+). The enzyme catalyses 11-cis-retinol + NAD(+) = 11-cis-retinal + NADH + H(+). It catalyses the reaction 13-cis-retinol + NAD(+) = 13-cis-retinal + NADH + H(+). The catalysed reaction is androsterone + NAD(+) = 5alpha-androstan-3,17-dione + NADH + H(+). It carries out the reaction 5alpha-androstane-3alpha,17beta-diol + NAD(+) = 17beta-hydroxy-5alpha-androstan-3-one + NADH + H(+). It functions in the pathway cofactor metabolism; retinol metabolism. In terms of biological role, oxidoreductase with a preference for NAD. Oxidizes all-trans-retinol, 9-cis-retinol, 11-cis-retinol and 13-cis-retinol to the corresponding aldehydes. Has higher activity towards CRBP-bound retinol than with free retinol. Oxidizes 3-alpha-hydroxysteroids. Oxidizes androstanediol and androsterone to dihydrotestosterone and androstanedione. Can also catalyze the reverse reaction. The chain is Retinol dehydrogenase 16 from Mus musculus (Mouse).